Consider the following 729-residue polypeptide: Rab-like protein 6 (729 aa).

Residue M1 is modified to N-acetylmethionine. The tract at residues 39-279 (GVQYNMKIVI…IFLEMMEARS (241 aa)) is small GTPase-like. GTP is bound by residues 50-57 (GDRNTGKT), 100-104 (DVVDK), and 177-179 (YRD). Positions 281–729 (GHASPLAANG…HPGGGDYEEL (449 aa)) are disordered. Residues 290–315 (GQSPSPGSQSPVVPAGAVSTGSSSPG) are compositionally biased toward low complexity. Pro residues predominate over residues 331–351 (SSVPPVPPSEALPPPACPSAP). The segment covering 395–416 (PDDRLDRSFLEDTTPARDEKKV) has biased composition (basic and acidic residues). S402, S425, S427, S470, S471, S492, S525, and S577 each carry phosphoserine. Over residues 489 to 502 (QQCSEPETKWSSIP) the composition is skewed to polar residues. The segment covering 581–595 (DTQRRADDFPVRDDP) has biased composition (basic and acidic residues). The residue at position 596 (S596) is a Phosphoserine. Over residues 596–605 (SDVTDEDEGP) the composition is skewed to acidic residues. Position 599 is a phosphothreonine (T599). Pro residues predominate over residues 606-615 (AEPPPPPKLP). The span at 635–652 (AGPKESSEEGKEGKTPSK) shows a compositional bias: basic and acidic residues. A phosphoserine mark is found at S640 and S641. Positions 655 to 693 (KKKKKKGKEEEEKAAKKKSKHKKSKDKEEGKEERRRRQQ) are interaction with CDKN2A. The span at 669–678 (AKKKSKHKKS) shows a compositional bias: basic residues. Residues 679–689 (KDKEEGKEERR) show a composition bias toward basic and acidic residues. The segment covering 711-729 (LGGGAPGGRHPGGGDYEEL) has biased composition (gly residues).

Belongs to the small GTPase superfamily. Rab family. Post-translationally, isoform 1 is O-glycosylated, while other isoforms are not.

It localises to the cytoplasm. It is found in the nucleus. Its function is as follows. May enhance cellular proliferation. May reduce growth inhibitory activity of CDKN2A. This is Rab-like protein 6 (RABL6) from Homo sapiens (Human).